A 125-amino-acid polypeptide reads, in one-letter code: MSGRGKGGKAKGKSKSRSSRAGLQFPVGRIHRLLRKGNYAERIGAGAPVYLAAVMEYLAAEVLELAGNAARDNKKTRIIPRHLQLAIRNDEELNKLLSGVTIAQGGVLPNIQAVLLPKKSSQKTK.

The segment covering 1–18 has biased composition (basic residues); the sequence is MSGRGKGGKAKGKSKSRS. Residues 1-23 form a disordered region; it reads MSGRGKGGKAKGKSKSRSSRAGL. Ser-2 carries the N-acetylserine modification. Ser-2 is subject to Phosphoserine. Gln-104 bears the N5-methylglutamine mark.

Belongs to the histone H2A family. In terms of assembly, the nucleosome is a histone octamer containing two molecules each of H2A, H2B, H3 and H4 assembled in one H3-H4 heterotetramer and two H2A-H2B heterodimers. The octamer wraps approximately 147 bp of DNA.

The protein resides in the nucleus. It localises to the chromosome. Functionally, core component of nucleosome. Nucleosomes wrap and compact DNA into chromatin, limiting DNA accessibility to the cellular machineries which require DNA as a template. Histones thereby play a central role in transcription regulation, DNA repair, DNA replication and chromosomal stability. DNA accessibility is regulated via a complex set of post-translational modifications of histones, also called histone code, and nucleosome remodeling. In Urechis caupo (Innkeeper worm), this protein is Histone H2A.